A 97-amino-acid polypeptide reads, in one-letter code: Co-chaperonin GroES (97 aa).

This sequence belongs to the GroES chaperonin family. Heptamer of 7 subunits arranged in a ring. Interacts with the chaperonin GroEL.

The protein resides in the cytoplasm. Its function is as follows. Together with the chaperonin GroEL, plays an essential role in assisting protein folding. The GroEL-GroES system forms a nano-cage that allows encapsulation of the non-native substrate proteins and provides a physical environment optimized to promote and accelerate protein folding. GroES binds to the apical surface of the GroEL ring, thereby capping the opening of the GroEL channel. This is Co-chaperonin GroES from Pseudomonas aeruginosa (strain LESB58).